Consider the following 314-residue polypeptide: DNA-directed RNA polymerase subunit alpha (314 aa).

An alpha N-terminal domain (alpha-NTD) region spans residues 1–228; it reads MIEFEKPNIH…EHLAMFVDLT (228 aa). The alpha C-terminal domain (alpha-CTD) stretch occupies residues 245-314; sequence KEKMLEMTIE…DLGVSFRQDD (70 aa).

Belongs to the RNA polymerase alpha chain family. Homodimer. The RNAP catalytic core consists of 2 alpha, 1 beta, 1 beta' and 1 omega subunit. When a sigma factor is associated with the core the holoenzyme is formed, which can initiate transcription.

It catalyses the reaction RNA(n) + a ribonucleoside 5'-triphosphate = RNA(n+1) + diphosphate. Functionally, DNA-dependent RNA polymerase catalyzes the transcription of DNA into RNA using the four ribonucleoside triphosphates as substrates. This is DNA-directed RNA polymerase subunit alpha from Limosilactobacillus reuteri (strain DSM 20016) (Lactobacillus reuteri).